The primary structure comprises 316 residues: Phospholipase A1 2 (316 aa).

An N-terminal signal peptide occupies residues 1-4 (ADDL). Residues 5–14 (TTLRNGTLDR) constitute a propeptide that is removed on maturation. A disulfide bridge links C20 with C103. Residue S153 is the Nucleophile of the active site. D181 serves as the catalytic Charge relay system. Disulfide bonds link C192–C197 and C235–C240. The active-site Charge relay system is H242. Disulfide bonds link C257–C284, C258–C309, and C277–C282.

It belongs to the AB hydrolase superfamily. Lipase family. In terms of tissue distribution, expressed by the venom gland.

It is found in the secreted. The enzyme catalyses a 1,2-diacyl-sn-glycero-3-phosphocholine + H2O = a 2-acyl-sn-glycero-3-phosphocholine + a fatty acid + H(+). Catalyzes the hydrolysis of phosphatidylcholine with phospholipase A1 activity. May act as an allergen and induce hemolytic activity. This Polistes dominula (European paper wasp) protein is Phospholipase A1 2.